We begin with the raw amino-acid sequence, 25 residues long: Fibrinolytic enzyme large subunit (25 aa).

The Peptidase S1 domain maps to Val-1–Trp-25. The segment at Val-1–Trp-25 is disordered. Positions Gln-15–Trp-25 are enriched in polar residues.

Belongs to the peptidase S1 family. In terms of assembly, heterodimer of a large and a small subunit held together by hydrophobic interactions.

Cleaves the carboxyl side of basic amino acids, small neutral amino acids, and Met residue. It is also a plasminogen activator. In Eisenia fetida (Red wiggler worm), this protein is Fibrinolytic enzyme large subunit.